The sequence spans 385 residues: Serine/threonine-protein kinase SBK1 (385 aa).

The Protein kinase domain occupies Tyr32–Met297. ATP-binding positions include Leu38–Val46 and Lys61. Asp153 acts as the Proton acceptor in catalysis. Positions Thr328 to Ala338 are enriched in polar residues. Positions Thr328 to Arg374 are disordered. The span at Thr348–Ser361 shows a compositional bias: low complexity.

It belongs to the protein kinase superfamily. Ser/Thr protein kinase family. In terms of tissue distribution, mainly expressed in brain.

The protein localises to the cytoplasm. It carries out the reaction L-seryl-[protein] + ATP = O-phospho-L-seryl-[protein] + ADP + H(+). The enzyme catalyses L-threonyl-[protein] + ATP = O-phospho-L-threonyl-[protein] + ADP + H(+). Functionally, may be involved in the control of neuronal proliferation or migration in the brain of embryos. This chain is Serine/threonine-protein kinase SBK1 (sbk1), found in Danio rerio (Zebrafish).